We begin with the raw amino-acid sequence, 251 residues long: Imidazole glycerol phosphate synthase subunit HisF (251 aa).

Residues Asp11 and Asp130 contribute to the active site.

Belongs to the HisA/HisF family. As to quaternary structure, heterodimer of HisH and HisF.

Its subcellular location is the cytoplasm. It carries out the reaction 5-[(5-phospho-1-deoxy-D-ribulos-1-ylimino)methylamino]-1-(5-phospho-beta-D-ribosyl)imidazole-4-carboxamide + L-glutamine = D-erythro-1-(imidazol-4-yl)glycerol 3-phosphate + 5-amino-1-(5-phospho-beta-D-ribosyl)imidazole-4-carboxamide + L-glutamate + H(+). It functions in the pathway amino-acid biosynthesis; L-histidine biosynthesis; L-histidine from 5-phospho-alpha-D-ribose 1-diphosphate: step 5/9. Functionally, IGPS catalyzes the conversion of PRFAR and glutamine to IGP, AICAR and glutamate. The HisF subunit catalyzes the cyclization activity that produces IGP and AICAR from PRFAR using the ammonia provided by the HisH subunit. In Chlorobium luteolum (strain DSM 273 / BCRC 81028 / 2530) (Pelodictyon luteolum), this protein is Imidazole glycerol phosphate synthase subunit HisF.